The chain runs to 226 residues: ATP-dependent dethiobiotin synthetase BioD (226 aa).

Residue 12–17 (GVGKTV) participates in ATP binding. Thr16 serves as a coordination point for Mg(2+). Lys37 is a catalytic residue. Thr41 serves as a coordination point for substrate. ATP is bound by residues Asp49, 108 to 111 (EGAG), and 169 to 170 (GS). Positions 49 and 108 each coordinate Mg(2+).

The protein belongs to the dethiobiotin synthetase family. Homodimer. It depends on Mg(2+) as a cofactor.

It is found in the cytoplasm. It carries out the reaction (7R,8S)-7,8-diammoniononanoate + CO2 + ATP = (4R,5S)-dethiobiotin + ADP + phosphate + 3 H(+). It functions in the pathway cofactor biosynthesis; biotin biosynthesis; biotin from 7,8-diaminononanoate: step 1/2. In terms of biological role, catalyzes a mechanistically unusual reaction, the ATP-dependent insertion of CO2 between the N7 and N8 nitrogen atoms of 7,8-diaminopelargonic acid (DAPA, also called 7,8-diammoniononanoate) to form a ureido ring. The polypeptide is ATP-dependent dethiobiotin synthetase BioD (Mycobacterium marinum (strain ATCC BAA-535 / M)).